The following is a 524-amino-acid chain: Probable 1,3-beta-glucanosyltransferase GAS3 (524 aa).

The signal sequence occupies residues 1–21; that stretch reads MQLSKSILLAALAATPSLVNA. A disulfide bridge links Cys-78 with Cys-107. 3 residues coordinate (1,3-beta-D-glucosyl)n: Tyr-96, Asn-168, and Glu-169. The Proton donor role is filled by Glu-169. Asn-201 carries N-linked (GlcNAc...) asparagine glycosylation. (1,3-beta-D-glucosyl)n-binding residues include Asp-212 and Arg-217. Cystine bridges form between Cys-226–Cys-369 and Cys-254–Cys-286. Residue Asn-269 is glycosylated (N-linked (GlcNAc...) asparagine). The Nucleophile role is filled by Glu-283. A (1,3-beta-D-glucosyl)n-binding site is contributed by Tyr-315. 4 N-linked (GlcNAc...) asparagine glycosylation sites follow: Asn-350, Asn-385, Asn-404, and Asn-422. The interval 461–498 is disordered; sequence TSQSSSRSLTSSTSPSSSTGSSSSTGSSSASSSSKSKG. A lipid anchor (GPI-anchor amidated glycine) is attached at Gly-498. Residues 499 to 524 constitute a propeptide, removed in mature form; sequence VGNIVNVSFSQSGYLALFAGLISALL.

It belongs to the glycosyl hydrolase 72 family. In terms of processing, the GPI-anchor is attached to the protein in the endoplasmic reticulum and serves to target the protein to the cell surface. There, the glucosamine-inositol phospholipid moiety is cleaved off and the GPI-modified mannoprotein is covalently attached via its lipidless GPI glycan remnant to the 1,6-beta-glucan of the outer cell wall layer. N-glycosylated.

It localises to the secreted. It is found in the cell wall. The protein localises to the membrane. Its function is as follows. Splits internally a 1,3-beta-glucan molecule and transfers the newly generated reducing end (the donor) to the non-reducing end of another 1,3-beta-glucan molecule (the acceptor) forming a 1,3-beta linkage, resulting in the elongation of 1,3-beta-glucan chains in the cell wall. Involved in cell wall biosynthesis and morphogenesis. This Saccharomyces cerevisiae (strain ATCC 204508 / S288c) (Baker's yeast) protein is Probable 1,3-beta-glucanosyltransferase GAS3 (GAS3).